Here is a 494-residue protein sequence, read N- to C-terminus: UDP-N-acetylmuramate--L-alanine ligase (494 aa).

134-140 (GSHGKTT) provides a ligand contact to ATP.

Belongs to the MurCDEF family.

The protein localises to the cytoplasm. It catalyses the reaction UDP-N-acetyl-alpha-D-muramate + L-alanine + ATP = UDP-N-acetyl-alpha-D-muramoyl-L-alanine + ADP + phosphate + H(+). The protein operates within cell wall biogenesis; peptidoglycan biosynthesis. Cell wall formation. The sequence is that of UDP-N-acetylmuramate--L-alanine ligase from Prochlorococcus marinus (strain NATL1A).